The primary structure comprises 87 residues: Phosphoribosyl-ATP pyrophosphatase (87 aa).

It belongs to the PRA-PH family.

The protein localises to the cytoplasm. The enzyme catalyses 1-(5-phospho-beta-D-ribosyl)-ATP + H2O = 1-(5-phospho-beta-D-ribosyl)-5'-AMP + diphosphate + H(+). It participates in amino-acid biosynthesis; L-histidine biosynthesis; L-histidine from 5-phospho-alpha-D-ribose 1-diphosphate: step 2/9. The sequence is that of Phosphoribosyl-ATP pyrophosphatase from Nocardioides sp. (strain ATCC BAA-499 / JS614).